A 300-amino-acid chain; its full sequence is Probable amino-acid ABC transporter periplasmic-binding protein y4tE (300 aa).

Residues 1–27 form the signal peptide; the sequence is MTHLKISKTAPAVARFLPAGRIASVAA.

Belongs to the bacterial solute-binding protein 3 family.

It is found in the periplasm. In terms of biological role, probably part of the binding-protein-dependent transport system y4tEFGH for an amino acid. The sequence is that of Probable amino-acid ABC transporter periplasmic-binding protein y4tE from Sinorhizobium fredii (strain NBRC 101917 / NGR234).